A 411-amino-acid chain; its full sequence is Meiotically up-regulated gene 147 protein (411 aa).

Disordered regions lie at residues 1-52, 102-137, and 156-191; these read MLAQ…FENK, EREESGHDEEEADKDASFTGYYNSRNNDEEGSELAD, and HQHEDEFSSSNKDKGFTYEKPVTELPPKRPPYHYES. Residues 33-43 are compositionally biased toward polar residues; sequence TQNESNLQQSE. The segment covering 156–172 has biased composition (basic and acidic residues); sequence HQHEDEFSSSNKDKGFT.

It localises to the cytoplasm. Its subcellular location is the nucleus. Has a role in meiosis. This Schizosaccharomyces pombe (strain 972 / ATCC 24843) (Fission yeast) protein is Meiotically up-regulated gene 147 protein (mug147).